A 148-amino-acid chain; its full sequence is 3-dehydroquinate dehydratase (148 aa).

Y23 serves as the catalytic Proton acceptor. Positions 75, 81, and 88 each coordinate substrate. Residue H101 is the Proton donor of the active site. Substrate is bound by residues 102 to 103 and R112; that span reads LS.

It belongs to the type-II 3-dehydroquinase family. Homododecamer.

It catalyses the reaction 3-dehydroquinate = 3-dehydroshikimate + H2O. It functions in the pathway metabolic intermediate biosynthesis; chorismate biosynthesis; chorismate from D-erythrose 4-phosphate and phosphoenolpyruvate: step 3/7. In terms of biological role, catalyzes a trans-dehydration via an enolate intermediate. This Xylella fastidiosa (strain M23) protein is 3-dehydroquinate dehydratase.